Consider the following 637-residue polypeptide: Chaperone protein HtpG (637 aa).

Positions 1-345 (MSQQETHGFQ…SNDLPLNVSR (345 aa)) are a; substrate-binding. The interval 346 to 562 (EILQDNHVTK…DGEMSTQMIK (217 aa)) is b. The c stretch occupies residues 563–637 (LMQAAGQPVP…MNQMLLANMK (75 aa)).

The protein belongs to the heat shock protein 90 family. As to quaternary structure, homodimer.

It is found in the cytoplasm. Functionally, molecular chaperone. Has ATPase activity. The polypeptide is Chaperone protein HtpG (Shewanella baltica (strain OS155 / ATCC BAA-1091)).